The primary structure comprises 255 residues: Complement C1q-like protein 3 (255 aa).

Positions M1–A20 are cleaved as a signal peptide. A disordered region spans residues K39–G109. The Collagen-like domain occupies G61–N111. Pro residues predominate over residues R75–P89. The region spanning S122–D255 is the C1q domain.

In terms of assembly, forms homooligomers. Interacts with ADGRB3. Interacts with C1QL2 and C1QL4, when proteins are coexpressed; this interaction does not occur after secretion. As to expression, highly expressed in adipose tissue, with expression levels at least 2 orders of magnitude higher than in other tissues, including brain and kidney.

It localises to the secreted. Functionally, may regulate the number of excitatory synapses that are formed on hippocampus neurons. Has no effect on inhibitory synapses. Plays a role in glucose homeostasis. Via AMPK signaling pathway, stimulates glucose uptake in adipocytes, myotubes and hepatocytes and enhances insulin-stimulated glucose uptake. In a hepatoma cell line, reduces the expression of gluconeogenic enzymes G6PC1 and PCK1 and hence decreases de novo glucose production. The polypeptide is Complement C1q-like protein 3 (C1QL3) (Homo sapiens (Human)).